A 370-amino-acid chain; its full sequence is MTEKINLLNLSETELQGFIASQGQPLYRATQLLQWIHQRGVTDFSLMTDLSKPFRQQLSEASFVRVPELALERVSADGTHKWLFRLADNNKIETVFIPDRKRGTLCVSSQVGCALNCSFCATGKEGFNRNLTLAEIIGQVWLAARLLKSPYKITNVVMMGMGEPLLNYEAVVAAMHLMMHDHAYGLSKYRVTLSTSGVIPAMRRLREESPVSLAVSLHAPNDALRNVLIPLNKKYSLDQLIPLCRDYYSRGSKRCVTFEYVMIEGMNDRLIDAKQLIRLLADVPCKINLIPFNSFQGTAYRCSTESAISVFQKCLMDAGFNTRVRRTRGDDIAGACGQLAGQFHDRTGRHQRWVQKQGHDFNRPIPAIDH.

E93 serves as the catalytic Proton acceptor. The 233-residue stretch at 99-331 (DRKRGTLCVS…TRVRRTRGDD (233 aa)) folds into the Radical SAM core domain. C106 and C336 form a disulfide bridge. Positions 113, 117, and 120 each coordinate [4Fe-4S] cluster. Residues 162 to 163 (GE), S194, 216 to 218 (SLH), and N293 contribute to the S-adenosyl-L-methionine site. Residue C336 is the S-methylcysteine intermediate of the active site.

The protein belongs to the radical SAM superfamily. RlmN family. [4Fe-4S] cluster is required as a cofactor.

Its subcellular location is the cytoplasm. It catalyses the reaction adenosine(2503) in 23S rRNA + 2 reduced [2Fe-2S]-[ferredoxin] + 2 S-adenosyl-L-methionine = 2-methyladenosine(2503) in 23S rRNA + 5'-deoxyadenosine + L-methionine + 2 oxidized [2Fe-2S]-[ferredoxin] + S-adenosyl-L-homocysteine. The enzyme catalyses adenosine(37) in tRNA + 2 reduced [2Fe-2S]-[ferredoxin] + 2 S-adenosyl-L-methionine = 2-methyladenosine(37) in tRNA + 5'-deoxyadenosine + L-methionine + 2 oxidized [2Fe-2S]-[ferredoxin] + S-adenosyl-L-homocysteine. Its function is as follows. Specifically methylates position 2 of adenine 2503 in 23S rRNA and position 2 of adenine 37 in tRNAs. m2A2503 modification seems to play a crucial role in the proofreading step occurring at the peptidyl transferase center and thus would serve to optimize ribosomal fidelity. The sequence is that of Dual-specificity RNA methyltransferase RlmN from Coxiella burnetii (strain CbuK_Q154) (Coxiella burnetii (strain Q154)).